A 967-amino-acid polypeptide reads, in one-letter code: RNA polymerase-associated protein RapA (967 aa).

The Helicase ATP-binding domain maps to 163–333; it reads EVGKRHNPRV…FARLRLLDPN (171 aa). 176–183 contributes to the ATP binding site; it reads DEVGLGKT. The short motif at 279-282 is the DEAH box element; the sequence is DEAH. The Helicase C-terminal domain occupies 489 to 660; the sequence is RVEWLLGFLT…NYLAQPNELG (172 aa).

Belongs to the SNF2/RAD54 helicase family. RapA subfamily. Interacts with the RNAP. Has a higher affinity for the core RNAP than for the holoenzyme. Its ATPase activity is stimulated by binding to RNAP.

In terms of biological role, transcription regulator that activates transcription by stimulating RNA polymerase (RNAP) recycling in case of stress conditions such as supercoiled DNA or high salt concentrations. Probably acts by releasing the RNAP, when it is trapped or immobilized on tightly supercoiled DNA. Does not activate transcription on linear DNA. Probably not involved in DNA repair. The protein is RNA polymerase-associated protein RapA of Proteus mirabilis (strain HI4320).